A 201-amino-acid polypeptide reads, in one-letter code: Small ribosomal subunit protein uS4 (201 aa).

Residues 26–45 (FEKRNYPPGQHGNNRRRGKK) form a disordered region. The 61-residue stretch at 93-153 (SRLDNVVYRM…EKSKSLAVVQ (61 aa)) folds into the S4 RNA-binding domain.

It belongs to the universal ribosomal protein uS4 family. In terms of assembly, part of the 30S ribosomal subunit. Contacts protein S5. The interaction surface between S4 and S5 is involved in control of translational fidelity.

Functionally, one of the primary rRNA binding proteins, it binds directly to 16S rRNA where it nucleates assembly of the body of the 30S subunit. With S5 and S12 plays an important role in translational accuracy. This is Small ribosomal subunit protein uS4 from Christiangramia forsetii (strain DSM 17595 / CGMCC 1.15422 / KT0803) (Gramella forsetii).